Reading from the N-terminus, the 49-residue chain is Large ribosomal subunit protein bL33 (49 aa).

This sequence belongs to the bacterial ribosomal protein bL33 family.

The sequence is that of Large ribosomal subunit protein bL33 from Fervidobacterium nodosum (strain ATCC 35602 / DSM 5306 / Rt17-B1).